Here is a 348-residue protein sequence, read N- to C-terminus: Caricain (348 aa).

An N-terminal signal peptide occupies residues 1–16 (MAMIPSISKLLFVAIC). Positions 17 to 132 (LFVHMSVSFG…EEFINEDTVN (116 aa)) are cleaved as a propeptide — activation peptide. N-linked (GlcNAc...) asparagine glycosylation occurs at Asn-86. Cystine bridges form between Cys-154/Cys-195, Cys-188/Cys-227, and Cys-285/Cys-336. Residue Cys-157 is part of the active site. Cys-157 serves as a coordination point for E64. Active-site residues include His-291 and Asn-311.

It belongs to the peptidase C1 family. In terms of assembly, monomer.

It carries out the reaction Hydrolysis of proteins with broad specificity for peptide bonds, similar to those of papain and chymopapain.. With respect to regulation, repressed by the active-site-directed cysteine protease inhibitor E64 (L-trans-epoxysuccinyl-leucylamide-(4-guanido)-butane) produced by Aspergillus japonicus. Functionally, cysteine proteinase with a high level of diversity in substrate specificity. The sequence is that of Caricain from Carica papaya (Papaya).